The chain runs to 196 residues: uncharacterized protein (196 aa).

The protein belongs to the NAD(P)H dehydrogenase (quinone) family.

This is an uncharacterized protein from Escherichia coli (strain K12).